The following is a 294-amino-acid chain: MSNWLVDKLIPSIMRSEVKKSSVPEGLWHKCPSCDAVLYRPELEKTLDVCPKCNHHMRIGARARLDIFLDQDGREEIGADLEPVDRLKFRDSKKYKDRLAAAQKQTGEKDALIAMSGTLEGMPIAVCAFEFSFMGGSMGAIVGERFVQAANVALEQRCPLVCFSASGGARMQEALISLMQMAKTSAALARLREEGLPFISVLTDPVYGGVSASLAMLGDVIVAEPKALIGFAGPRVIEQTVREKLPEGFQRSEFLLEHGAIDMIIPRNELRPRLARLLAQLMNRPSPVALPVTA.

The 268-residue stretch at 27-294 (LWHKCPSCDA…PSPVALPVTA (268 aa)) folds into the CoA carboxyltransferase N-terminal domain. The Zn(2+) site is built by C31, C34, C50, and C53. The segment at 31 to 53 (CPSCDAVLYRPELEKTLDVCPKC) adopts a C4-type zinc-finger fold.

Belongs to the AccD/PCCB family. As to quaternary structure, acetyl-CoA carboxylase is a heterohexamer composed of biotin carboxyl carrier protein (AccB), biotin carboxylase (AccC) and two subunits each of ACCase subunit alpha (AccA) and ACCase subunit beta (AccD). It depends on Zn(2+) as a cofactor.

The protein resides in the cytoplasm. The catalysed reaction is N(6)-carboxybiotinyl-L-lysyl-[protein] + acetyl-CoA = N(6)-biotinyl-L-lysyl-[protein] + malonyl-CoA. It functions in the pathway lipid metabolism; malonyl-CoA biosynthesis; malonyl-CoA from acetyl-CoA: step 1/1. In terms of biological role, component of the acetyl coenzyme A carboxylase (ACC) complex. Biotin carboxylase (BC) catalyzes the carboxylation of biotin on its carrier protein (BCCP) and then the CO(2) group is transferred by the transcarboxylase to acetyl-CoA to form malonyl-CoA. The chain is Acetyl-coenzyme A carboxylase carboxyl transferase subunit beta from Ectopseudomonas mendocina (strain ymp) (Pseudomonas mendocina).